Reading from the N-terminus, the 408-residue chain is SERPINE1 mRNA-binding protein 1 (408 aa).

S25 is modified (phosphoserine). Disordered stretches follow at residues 33 to 292 (AAEN…TLDE) and 328 to 408 (SKSE…PALA). The segment covering 51-68 (AKSAAQAAAQTNSNAAGK) has biased composition (low complexity). N6-acetyllysine; alternate is present on K52. K52 is covalently cross-linked (Glycyl lysine isopeptide (Lys-Gly) (interchain with G-Cter in SUMO1); alternate). Residue K68 is modified to N6-acetyllysine. Composition is skewed to basic and acidic residues over residues 70 to 80 (LRKESQKDRKN), 89 to 114 (VDKKEETQPPVALKKEGIRRVGRRPD), and 122 to 162 (KIID…DRPI). K102 is covalently cross-linked (Glycyl lysine isopeptide (Lys-Gly) (interchain with G-Cter in SUMO1); alternate). K102 participates in a covalent cross-link: Glycyl lysine isopeptide (Lys-Gly) (interchain with G-Cter in SUMO2); alternate. N6-acetyllysine occurs at positions 122 and 140. The segment covering 164-182 (GRGGLGRGRGGRGRGMGRG) has biased composition (gly residues). Omega-N-methylarginine is present on residues R165 and R188. Residues 183-199 (DGFDSRGKREFDRHSGS) show a composition bias toward basic and acidic residues. S197 bears the Phosphoserine mark. Phosphoserine; by MTOR is present on S199. Phosphoserine occurs at positions 203, 205, and 208. K211 carries the post-translational modification N6-acetyllysine; alternate. K211 is covalently cross-linked (Glycyl lysine isopeptide (Lys-Gly) (interchain with G-Cter in SUMO2); alternate). R216 carries the post-translational modification Omega-N-methylarginine. S221 bears the Phosphoserine mark. H222 participates in a covalent cross-link: Glycyl lysine isopeptide (Lys-Gly) (interchain with G-Cter in SUMO2). Position 226 is a phosphothreonine; by MTOR (T226). A Glycyl lysine isopeptide (Lys-Gly) (interchain with G-Cter in SUMO1); alternate cross-link involves residue K228. A Glycyl lysine isopeptide (Lys-Gly) (interchain with G-Cter in SUMO2); alternate cross-link involves residue K228. A Glycyl lysine isopeptide (Lys-Gly) (interchain with G-Cter in SUMO2) cross-link involves residue K228. Residues L231, S234, and Y237 each carry the phosphoserine modification. S234 bears the Phosphothreonine mark. K240 is subject to Phosphothreonine. Residues 240-253 (KQISYNYSDLDQSN) show a composition bias toward polar residues. Residues 261-275 (GEEHHPVADTENKEN) are compositionally biased toward basic and acidic residues. K281 participates in a covalent cross-link: Glycyl lysine isopeptide (Lys-Gly) (interchain with G-Cter in SUMO1); alternate. A Glycyl lysine isopeptide (Lys-Gly) (interchain with G-Cter in SUMO2); alternate cross-link involves residue K281. Basic and acidic residues-rich tracts occupy residues 282 to 292 (EEGPKEMTLDE) and 328 to 342 (SKSEEAHAEDSVMDH). K329 is subject to N6-acetyllysine. S330 is modified (phosphoserine). The span at 363–372 (GRPGRGGRGG) shows a compositional bias: gly residues. Omega-N-methylarginine occurs at positions 364, 367, and 370. Phosphoserine occurs at positions 392 and 394.

It belongs to the SERBP1-HABP4 family. Associates with mature 80S ribosomes. Interacts with EEF2/eEF2; interaction sequesters EEF2/eEF2 at the A-site of the ribosome, thereby blocking the interaction sites of the mRNA-tRNA complex, promoting ribosome stabilization and hibernation. Interacts with SPIN1. Interacts with CHD3 and TDRD3. Interacts with ZDHHC17 (via ANK repeats). Post-translationally, phosphorylation by MTOR inhibits SERBP1 and relieves ribosome hibernation. In terms of tissue distribution, expressed at high level in the heart, skeletal muscle and kidney, and at low levels in placenta, liver and brain.

The protein resides in the cytoplasm. The protein localises to the nucleus. It is found in the perinuclear region. Its function is as follows. Ribosome-binding protein that promotes ribosome hibernation, a process during which ribosomes are stabilized in an inactive state and preserved from proteasomal degradation. Acts via its association with EEF2/eEF2 factor, sequestering EEF2/eEF2 at the A-site of the ribosome and promoting ribosome stabilization and storage in an inactive state. May also play a role in the regulation of mRNA stability: binds to the 3'-most 134 nt of the SERPINE1/PAI1 mRNA, a region which confers cyclic nucleotide regulation of message decay. Seems to play a role in PML-nuclear bodies formation. The protein is SERPINE1 mRNA-binding protein 1 of Homo sapiens (Human).